We begin with the raw amino-acid sequence, 457 residues long: Siroheme synthase (457 aa).

The interval 1-204 (MDHLPIFCQL…NDQKAITETT (204 aa)) is precorrin-2 dehydrogenase /sirohydrochlorin ferrochelatase. NAD(+) is bound by residues 22 to 23 (DV) and 43 to 44 (LA). A Phosphoserine modification is found at Ser128. Residues 216–457 (GEVVLVGAGP…RDKLNWFSNH (242 aa)) form a uroporphyrinogen-III C-methyltransferase region. Pro225 is a binding site for S-adenosyl-L-methionine. Asp248 (proton acceptor) is an active-site residue. Lys270 functions as the Proton donor in the catalytic mechanism. S-adenosyl-L-methionine-binding positions include 301–303 (GGD), Ile306, 331–332 (TA), Met382, and Gly411.

It in the N-terminal section; belongs to the precorrin-2 dehydrogenase / sirohydrochlorin ferrochelatase family. In the C-terminal section; belongs to the precorrin methyltransferase family.

It catalyses the reaction uroporphyrinogen III + 2 S-adenosyl-L-methionine = precorrin-2 + 2 S-adenosyl-L-homocysteine + H(+). It carries out the reaction precorrin-2 + NAD(+) = sirohydrochlorin + NADH + 2 H(+). The catalysed reaction is siroheme + 2 H(+) = sirohydrochlorin + Fe(2+). Its pathway is cofactor biosynthesis; adenosylcobalamin biosynthesis; precorrin-2 from uroporphyrinogen III: step 1/1. The protein operates within cofactor biosynthesis; adenosylcobalamin biosynthesis; sirohydrochlorin from precorrin-2: step 1/1. It functions in the pathway porphyrin-containing compound metabolism; siroheme biosynthesis; precorrin-2 from uroporphyrinogen III: step 1/1. It participates in porphyrin-containing compound metabolism; siroheme biosynthesis; siroheme from sirohydrochlorin: step 1/1. Its pathway is porphyrin-containing compound metabolism; siroheme biosynthesis; sirohydrochlorin from precorrin-2: step 1/1. Functionally, multifunctional enzyme that catalyzes the SAM-dependent methylations of uroporphyrinogen III at position C-2 and C-7 to form precorrin-2 via precorrin-1. Then it catalyzes the NAD-dependent ring dehydrogenation of precorrin-2 to yield sirohydrochlorin. Finally, it catalyzes the ferrochelation of sirohydrochlorin to yield siroheme. The protein is Siroheme synthase of Escherichia coli O6:K15:H31 (strain 536 / UPEC).